A 270-amino-acid chain; its full sequence is Interleukin-1 alpha (270 aa).

The propeptide occupies 1–114 (MAKVPDLFED…HDLEETIQPR (114 aa)). N-linked (GlcNAc...) asparagine glycosylation occurs at N46. N6-acetyllysine is present on K85. Residues 85–89 (KKRRL) are nuclear localization signal (NLS). At S90 the chain carries Phosphoserine. Residue N139 is glycosylated (N-linked (GlcNAc...) asparagine).

It belongs to the IL-1 family. Monomer. Interacts with TMED10; the interaction mediates the translocation from the cytoplasm into the ERGIC (endoplasmic reticulum-Golgi intermediate compartment) and thereby secretion. Interacts with IL1R1. Interacts with S100A13; this interaction is the first step in the export of IL1A, followed by direct translocation of this complex across the plasma membrane. Acetylated within its nuclear localization sequence, which impacts subcellular localization. Post-translationally, proteolytic processed by CAPN1 in a calcium-dependent manner. Cleavage from 31 kDa precursor to 18 kDa biologically active molecules. In terms of processing, phosphorylated. Phosphorylation greatly enhances susceptibility to digestion and promotes the conversion of pre-IL1A alpha to the biologically active IL1A.

Its subcellular location is the nucleus. It localises to the cytoplasm. The protein resides in the secreted. Its function is as follows. Cytokine constitutively present intracellularly in nearly all resting non-hematopoietic cells that plays an important role in inflammation and bridges the innate and adaptive immune systems. After binding to its receptor IL1R1 together with its accessory protein IL1RAP, forms the high affinity interleukin-1 receptor complex. Signaling involves the recruitment of adapter molecules such as MYD88, IRAK1 or IRAK4. In turn, mediates the activation of NF-kappa-B and the three MAPK pathways p38, p42/p44 and JNK pathways. Within the cell, acts as an alarmin and cell death results in its liberation in the extracellular space after disruption of the cell membrane to induce inflammation and alert the host to injury or damage. In addition to its role as a danger signal, which occurs when the cytokine is passively released by cell necrosis, directly senses DNA damage and acts as signal for genotoxic stress without loss of cell integrity. In Rattus norvegicus (Rat), this protein is Interleukin-1 alpha.